Reading from the N-terminus, the 436-residue chain is KICSTOR complex protein kaptin (436 aa).

Methionine 1 is modified (N-acetylmethionine).

As to quaternary structure, part of the KICSTOR complex composed of KPTN, ITFG2, KICS2 and SZT2. SZT2 probably serves as a link between the other three proteins in the KICSTOR complex and mediates the direct interaction with the GATOR1 complex. May associate with F-actin filaments.

It is found in the lysosome membrane. The protein localises to the cell projection. The protein resides in the lamellipodium. Its subcellular location is the stereocilium. In terms of biological role, as part of the KICSTOR complex functions in the amino acid-sensing branch of the TORC1 signaling pathway. Recruits, in an amino acid-independent manner, the GATOR1 complex to the lysosomal membranes and allows its interaction with GATOR2 and the RAG GTPases. Functions upstream of the RAG GTPases and is required to negatively regulate mTORC1 signaling in absence of amino acids. In absence of the KICSTOR complex mTORC1 is constitutively localized to the lysosome and activated. The KICSTOR complex is also probably involved in the regulation of mTORC1 by glucose. This Homo sapiens (Human) protein is KICSTOR complex protein kaptin.